We begin with the raw amino-acid sequence, 347 residues long: 3-isopropylmalate dehydrogenase (347 aa).

Substrate contacts are provided by R94, R104, R128, and D219. The Mg(2+) site is built by D219, D243, and D247. Residue 279-291 participates in NAD(+) binding; the sequence is GSAPDIAGQGKAD.

Belongs to the isocitrate and isopropylmalate dehydrogenases family. LeuB type 2 subfamily. In terms of assembly, homodimer. Mg(2+) serves as cofactor. Mn(2+) is required as a cofactor.

It localises to the cytoplasm. The enzyme catalyses (2R,3S)-3-isopropylmalate + NAD(+) = 4-methyl-2-oxopentanoate + CO2 + NADH. It participates in amino-acid biosynthesis; L-leucine biosynthesis; L-leucine from 3-methyl-2-oxobutanoate: step 3/4. In terms of biological role, catalyzes the oxidation of 3-carboxy-2-hydroxy-4-methylpentanoate (3-isopropylmalate) to 3-carboxy-4-methyl-2-oxopentanoate. The product decarboxylates to 4-methyl-2 oxopentanoate. The polypeptide is 3-isopropylmalate dehydrogenase (Streptomyces avermitilis (strain ATCC 31267 / DSM 46492 / JCM 5070 / NBRC 14893 / NCIMB 12804 / NRRL 8165 / MA-4680)).